A 318-amino-acid polypeptide reads, in one-letter code: Replication factor C small subunit (318 aa).

Residue 43-50 (GSVGTGKT) participates in ATP binding.

It belongs to the activator 1 small subunits family. RfcS subfamily. As to quaternary structure, heteromultimer composed of small subunits (RfcS) and large subunits (RfcL).

Part of the RFC clamp loader complex which loads the PCNA sliding clamp onto DNA. In Thermoplasma acidophilum (strain ATCC 25905 / DSM 1728 / JCM 9062 / NBRC 15155 / AMRC-C165), this protein is Replication factor C small subunit.